A 374-amino-acid chain; its full sequence is F-box/LRR-repeat protein 8 (374 aa).

The F-box domain occupies 2–48 (GELVDNLPEEVLALIFRDLPLRDLAVATRVCRAWAAAAANSTVWSDK).

Directly interacts with SKP1 and CUL1. In terms of tissue distribution, widely expressed during embryogenesis and in adult tissues.

In terms of biological role, substrate-recognition component of the SCF (SKP1-CUL1-F-box protein)-type E3 ubiquitin ligase complex. In Mus musculus (Mouse), this protein is F-box/LRR-repeat protein 8 (Fbxl8).